Consider the following 382-residue polypeptide: S-adenosylmethionine synthase (382 aa).

ATP is bound at residue His16. A Mg(2+)-binding site is contributed by Asp18. Residue Glu44 coordinates K(+). L-methionine is bound by residues Glu57 and Gln100. The interval 100–110 is flexible loop; that stretch reads QSADIAMGVDE. ATP is bound by residues 165 to 167, Asp240, 246 to 247, Ala263, and Lys267; these read DAK and RK. Asp240 serves as a coordination point for L-methionine. Lys271 is an L-methionine binding site.

Belongs to the AdoMet synthase family. In terms of assembly, homotetramer; dimer of dimers. Mg(2+) is required as a cofactor. The cofactor is K(+).

It is found in the cytoplasm. The catalysed reaction is L-methionine + ATP + H2O = S-adenosyl-L-methionine + phosphate + diphosphate. It functions in the pathway amino-acid biosynthesis; S-adenosyl-L-methionine biosynthesis; S-adenosyl-L-methionine from L-methionine: step 1/1. Functionally, catalyzes the formation of S-adenosylmethionine (AdoMet) from methionine and ATP. The overall synthetic reaction is composed of two sequential steps, AdoMet formation and the subsequent tripolyphosphate hydrolysis which occurs prior to release of AdoMet from the enzyme. The chain is S-adenosylmethionine synthase from Saccharophagus degradans (strain 2-40 / ATCC 43961 / DSM 17024).